Consider the following 335-residue polypeptide: Putative SWIB domain-containing protein R508 (335 aa).

The segment covering 1–12 (MSKRVTSSKKSK) has biased composition (basic residues). Residues 1 to 182 (MSKRVTSSKK…NKKSPKKLLN (182 aa)) are disordered. Residues 24-33 (KNLSKTSKSV) show a composition bias toward low complexity. Residues 60–75 (NIGGSKSSRTYNSEGS) show a composition bias toward polar residues. The segment covering 83–109 (SSKDSKVIKKNKQKVESSDSEKHSENK) has biased composition (basic and acidic residues). Basic residues predominate over residues 110–126 (SHKKSSKSSSISRKKPI). The span at 163–173 (KGEDNNDEKQN) shows a compositional bias: basic and acidic residues. A coiled-coil region spans residues 181–217 (LNEKKISSESFDDKLNELREELRENYIRQKKIMNDIK). Residues 244-326 (GFNKPQTVPQ…QTWLKKVYNE (83 aa)) form the SWIB/MDM2 domain.

In Acanthamoeba polyphaga mimivirus (APMV), this protein is Putative SWIB domain-containing protein R508.